A 248-amino-acid chain; its full sequence is 21S rRNA pseudouridine(2819) synthase (248 aa).

The active site involves Asp58.

Belongs to the pseudouridine synthase RluA family.

It localises to the mitochondrion. The catalysed reaction is uridine(2819) in 21S rRNA = pseudouridine(2819) in 21S rRNA. Pseudouridylate synthase responsible for the pseudouridine-2819 formation in mitochondrial 21S rRNA. May modulate the efficiency or the fidelity of the mitochondrial translation machinery. In Candida albicans (strain SC5314 / ATCC MYA-2876) (Yeast), this protein is 21S rRNA pseudouridine(2819) synthase (PUS5).